The following is a 294-amino-acid chain: tRNA dimethylallyltransferase (294 aa).

Gly10 to Thr17 is a binding site for ATP. Thr12 to Thr17 contributes to the substrate binding site. Residues Asp35 to Gln38 form an interaction with substrate tRNA region.

The protein belongs to the IPP transferase family. Monomer. It depends on Mg(2+) as a cofactor.

The enzyme catalyses adenosine(37) in tRNA + dimethylallyl diphosphate = N(6)-dimethylallyladenosine(37) in tRNA + diphosphate. Catalyzes the transfer of a dimethylallyl group onto the adenine at position 37 in tRNAs that read codons beginning with uridine, leading to the formation of N6-(dimethylallyl)adenosine (i(6)A). The polypeptide is tRNA dimethylallyltransferase (Streptococcus pneumoniae serotype 2 (strain D39 / NCTC 7466)).